Reading from the N-terminus, the 283-residue chain is uncharacterized protein (283 aa).

Residue aspartate 121 is part of the active site.

The protein belongs to the pseudouridine synthase RluA family.

It carries out the reaction a uridine in RNA = a pseudouridine in RNA. This is an uncharacterized protein from Bacillus subtilis (strain 168).